Reading from the N-terminus, the 550-residue chain is Thermosome subunit (550 aa).

Residues 529 to 550 (KEKEGEKGGGGSEDFSSSSDLD) are disordered. A compositionally biased stretch (low complexity) spans 541–550 (EDFSSSSDLD).

The protein belongs to the TCP-1 chaperonin family. Forms an oligomeric complex of eight-membered rings.

Its function is as follows. Molecular chaperone; binds unfolded polypeptides in vitro, and has a weak ATPase activity. In Pyrococcus abyssi (strain GE5 / Orsay), this protein is Thermosome subunit (ths).